The following is a 442-amino-acid chain: Putative toxin YopC (442 aa).

This sequence in the C-terminal section; belongs to the MbcT/ParT/Res family. Forms a complex with cognate antitoxin YopB.

Its function is as follows. May be the toxic component of a type II toxin-antitoxin (TA) system. Neutralized by its cognate antitoxin YopB. This chain is Putative toxin YopC (yopC), found in Bacillus subtilis (strain 168).